The following is a 378-amino-acid chain: Wnt inhibitory factor 1 (378 aa).

The signal sequence occupies residues 1–28 (MAFRTPAVQLHLKACVLLLLGGLLEAAY). Positions 36–175 (MWIDANQARI…PHNAIFFKTC (140 aa)) constitute a WIF domain. Asn86 carries an N-linked (GlcNAc...) asparagine glycan. Disulfide bonds link Cys138–Cys175, Cys180–Cys190, Cys184–Cys196, Cys212–Cys222, Cys216–Cys228, and Cys230–Cys239. EGF-like domains are found at residues 176–205 (QRAK…FYGV), 208–240 (EKAL…SSCE), 243–272 (NCST…VRCE), 272–304 (ELSK…DLCS), and 305–336 (KAVC…RHCN). An N-linked (GlcNAc...) asparagine glycan is attached at Asn243. 9 disulfide bridges follow: Cys244–Cys254, Cys248–Cys260, Cys262–Cys271, Cys276–Cys286, Cys280–Cys292, Cys294–Cys303, Cys308–Cys318, Cys312–Cys324, and Cys326–Cys335. The tract at residues 343 to 378 (VSNSQRVSPSKHKSPSVAAAKEAPETSQPSETNYVV) is disordered. Residues 367–378 (ETSQPSETNYVV) are compositionally biased toward polar residues.

As to expression, highly expressed in unsegmented paraxial mesoderm.

The protein resides in the secreted. Binds to WNT proteins and inhibits their activities. May be involved in mesoderm segmentation. This Danio rerio (Zebrafish) protein is Wnt inhibitory factor 1 (wif1).